A 367-amino-acid polypeptide reads, in one-letter code: MFLGTLVPFLFVLTVVVFVHEMGHYLVGRWCGIGVRAFSIGFGPELIGFNDRHGTRWKLCAIPLGGYVKFVGDMNATSSQPTSEELETLTDEERKVAFHTQAIWKRAATVVAGPLFNFLLTIVVFSVLFASYGRYVAEPMVAEVTADSPAAKAGIQPGDRFVSVDGSKVETFGDVQRLVSGRAGDTITFVMLRDGKEVTVTATPQLMEQQDALGNKVKVAVIGVVNNKELGQPRLITYTPVGAVAAAVEETGHVIQRTGQFLQRFAVGREDKCQLGGPVKIADMAGKAAKLGFEWLVQLVALLSVGIGFLNLLPIPPLDGGHLLFYGVEAVIRRPVSERMMEMAYRAGLLLVLCFMGFVFWNDLFGC.

His-20 serves as a coordination point for Zn(2+). Residue Glu-21 is part of the active site. His-24 contributes to the Zn(2+) binding site. 3 helical membrane-spanning segments follow: residues 108–130 (ATVVAGPLFNFLLTIVVFSVLFA), 291–313 (LGFEWLVQLVALLSVGIGFLNLL), and 343–365 (MAYRAGLLLVLCFMGFVFWNDLF). The PDZ domain maps to 121–196 (TIVVFSVLFA…ITFVMLRDGK (76 aa)).

It belongs to the peptidase M50B family. The cofactor is Zn(2+).

The protein localises to the cell inner membrane. In Mesorhizobium japonicum (strain LMG 29417 / CECT 9101 / MAFF 303099) (Mesorhizobium loti (strain MAFF 303099)), this protein is Putative zinc metalloprotease mll0638.